A 947-amino-acid polypeptide reads, in one-letter code: Netrin receptor unc-5 (947 aa).

One can recognise an Ig-like domain in the interval 43–141 (VIRNKPLRLQ…VHLAYMRKHF (99 aa)). 5 cysteine pairs are disulfide-bonded: C53/C112, C160/C209, C243/C295, C247/C299, and C273/C285. The Ig-like C2-type domain maps to 139 to 226 (KHFLKSPVAQ…SRKTDPVEVQ (88 aa)). N-linked (GlcNAc...) asparagine glycosylation is present at N206. TSP type-1 domains follow at residues 230 to 300 (DGGW…VPCK) and 302 to 354 (DGGW…QLCT). 2 C-linked (Man) tryptophan glycosylation sites follow: W305 and W308. Residues 369 to 389 (GSVASIFIVASFILAILAMFC) traverse the membrane as a helical segment. Over 390-947 (CKRGNSKKSK…LSAFPQIVSP (558 aa)) the chain is Cytoplasmic. Phosphotyrosine is present on Y510. One can recognise a ZU5 domain in the interval 530–658 (NIVAAQIDSN…LNTNMFVQFE (129 aa)). The Death domain maps to 857 to 938 (ELARLLDMPN…DAVMVLERFL (82 aa)).

The protein belongs to the unc-5 family. Interacts (via cytoplasmic domain) with src-1 (via SH2 domain and SH3 domain). Interacts with madd-4. Interacts with unc-129; the interaction is direct. In terms of processing, phosphorylated on different cytoplasmic tyrosine residues. May be phosphorylated on tyrosine residues by src-1. Tyrosine phosphorylation is unc-6-dependent. Glycosylated via C-mannosylation by dpy-19 at Trp-305 and Trp-308. In terms of tissue distribution, expressed in cell bodies and axons of the VNC motor neurons that extend axons to the dorsal midline and within the ventral nerve cord. Expressed in gonadal distal tip cells (DTC).

It localises to the cell membrane. It is found in the membrane raft. Its subcellular location is the cell projection. The protein localises to the neuron projection. In terms of biological role, receptor for netrin (unc-6) required for axon guidance. Mediates axon repulsion of neuronal growth cones in the developing nervous system upon ligand binding. Axon migration is mediated by the secreted unc-6, which promotes attraction of neurons and axons through binding to the unc-40 receptor, while repulsion requires both unc-5 and unc-40 receptors. Involved in the ventral-dorsal and anterior-posterior migration of distal tip cells along the body, which may be mediated by Wnt receptor mom-5, ced-10/Rac, ced-12/ELMO and mig-2/RhoG. The sequence is that of Netrin receptor unc-5 from Caenorhabditis elegans.